Reading from the N-terminus, the 65-residue chain is Large ribosomal subunit protein bL35 (65 aa).

Residues 1–16 (MPKMKTKSSAKKRFKV) are compositionally biased toward basic residues. A disordered region spans residues 1–26 (MPKMKTKSSAKKRFKVRSSGGIKRSQ).

The protein belongs to the bacterial ribosomal protein bL35 family.

In Azoarcus sp. (strain BH72), this protein is Large ribosomal subunit protein bL35.